The sequence spans 344 residues: DNA-directed RNA polymerase subunit alpha (344 aa).

Positions 1-238 are alpha N-terminal domain (alpha-NTD); it reads MKVIKTAPLI…KQLGVFGEKP (238 aa). The alpha C-terminal domain (alpha-CTD) stretch occupies residues 253–344; the sequence is DAKDLSAKIE…EKLEDKGGND (92 aa).

It belongs to the RNA polymerase alpha chain family. In terms of assembly, homodimer. The RNAP catalytic core consists of 2 alpha, 1 beta, 1 beta' and 1 omega subunit. When a sigma factor is associated with the core the holoenzyme is formed, which can initiate transcription.

The catalysed reaction is RNA(n) + a ribonucleoside 5'-triphosphate = RNA(n+1) + diphosphate. DNA-dependent RNA polymerase catalyzes the transcription of DNA into RNA using the four ribonucleoside triphosphates as substrates. The sequence is that of DNA-directed RNA polymerase subunit alpha from Helicobacter acinonychis (strain Sheeba).